Here is a 150-residue protein sequence, read N- to C-terminus: Globin-2 (150 aa).

Positions 11–150 constitute a Globin domain; it reads PLSDAEKNKI…MICILLSSAY (140 aa). Heme b is bound by residues His74 and His106.

It belongs to the globin family. Monomer.

The protein is Globin-2 of Mordacia mordax (Southern hemisphere lamprey).